A 433-amino-acid polypeptide reads, in one-letter code: Phosphomethylpyrimidine synthase 1 (433 aa).

Substrate contacts are provided by residues Met-95, Tyr-124, His-163, 185-187, 226-229, and Glu-265; these read SRG and NAMR. His-269 provides a ligand contact to Zn(2+). Tyr-292 contributes to the substrate binding site. Residue His-333 participates in Zn(2+) binding. 3 residues coordinate [4Fe-4S] cluster: Cys-408, Cys-411, and Cys-415.

This sequence belongs to the ThiC family. The cofactor is [4Fe-4S] cluster.

The enzyme catalyses 5-amino-1-(5-phospho-beta-D-ribosyl)imidazole + S-adenosyl-L-methionine = 4-amino-2-methyl-5-(phosphooxymethyl)pyrimidine + CO + 5'-deoxyadenosine + formate + L-methionine + 3 H(+). The protein operates within cofactor biosynthesis; thiamine diphosphate biosynthesis. Catalyzes the synthesis of the hydroxymethylpyrimidine phosphate (HMP-P) moiety of thiamine from aminoimidazole ribotide (AIR) in a radical S-adenosyl-L-methionine (SAM)-dependent reaction. This is Phosphomethylpyrimidine synthase 1 from Methanothermobacter thermautotrophicus (strain ATCC 29096 / DSM 1053 / JCM 10044 / NBRC 100330 / Delta H) (Methanobacterium thermoautotrophicum).